The following is a 501-amino-acid chain: MRPSAPTGLLQQPKPFFMIFFVELWERFGYYGVQGILAVFFVQQLGFSQEQSFITFGAFSALVYGLISVGGYVGDHVLGTKRTMVLGAIVLVIGYFMTGMSIYNPDLIFYALGTIAVGNCLFKANPASLLAKCYERGDPRLDGAFTLFYMSINIGSLISLSLAPVIADHYGYTVTYNLCGVGLVIALLTFFACRHMVRDIGSEPDHLPLDYGKLLLVLLGSVALVFFCAWLMHHVVIANMVLMTVTLAVVIFFFREAFKLDAVARNKMYVAFVLMLEAVVFYVLYAQMPTSLNFFAINNMHHEMLGMSVNPISFQALNPFWVVVGSPVLAMIYTRLGSKGRDLTMPLKFTLGMLFCSLGFLTAAASGIWFADAQGLTSPWFMVLIYLFQSLGELMISALGLAMVAALVPQRLMGFILGMWFLTQAMASLLGGYVATFTAVPQGVTDPLQTLPIYTDVFGKIGLVTLLVAVVMALMVPWLNRMMHAGQGEEGEDLLSQQAKA.

Residues Met-1 to Arg-27 are Cytoplasmic-facing. A helical transmembrane segment spans residues Phe-28–Ser-48. At Gln-49–Ser-52 the chain is on the periplasmic side. Residues Phe-53–Val-73 form a helical membrane-spanning segment. The Cytoplasmic portion of the chain corresponds to Gly-74–Arg-82. The helical transmembrane segment at Thr-83–Tyr-103 threads the bilayer. At Asn-104–Asp-106 the chain is on the periplasmic side. Residues Leu-107–Ala-127 form a helical membrane-spanning segment. Residues Ser-128–Thr-146 lie on the Cytoplasmic side of the membrane. The chain crosses the membrane as a helical span at residues Leu-147 to Ala-167. The Periplasmic portion of the chain corresponds to Asp-168–Tyr-172. Residues Thr-173–Cys-193 traverse the membrane as a helical segment. At Arg-194–Tyr-211 the chain is on the cytoplasmic side. Residues Gly-212–Met-232 form a helical membrane-spanning segment. A topological domain (periplasmic) is located at residue His-233. The helical transmembrane segment at His-234–Phe-254 threads the bilayer. Topologically, residues Arg-255–Lys-267 are cytoplasmic. Residues Met-268–Met-288 traverse the membrane as a helical segment. The Periplasmic portion of the chain corresponds to Pro-289 to Pro-311. A helical transmembrane segment spans residues Ile-312–Ile-332. The Cytoplasmic segment spans residues Tyr-333–Thr-350. A helical transmembrane segment spans residues Leu-351–Ala-371. At Asp-372–Trp-380 the chain is on the periplasmic side. A helical membrane pass occupies residues Phe-381 to Leu-401. Over Ala-402–Arg-411 the chain is Cytoplasmic. Residues Leu-412 to Gly-432 form a helical membrane-spanning segment. The Periplasmic portion of the chain corresponds to Tyr-433–Asp-456. A helical membrane pass occupies residues Val-457 to Pro-477. Residues Trp-478 to Ala-501 lie on the Cytoplasmic side of the membrane.

It belongs to the major facilitator superfamily. Proton-dependent oligopeptide transporter (POT/PTR) (TC 2.A.17) family. DtpB subfamily.

The protein resides in the cell inner membrane. Proton-dependent permease that transports di- and tripeptides. In Aeromonas hydrophila subsp. hydrophila (strain ATCC 7966 / DSM 30187 / BCRC 13018 / CCUG 14551 / JCM 1027 / KCTC 2358 / NCIMB 9240 / NCTC 8049), this protein is Dipeptide and tripeptide permease B.